The following is a 408-amino-acid chain: Putative agmatinase 3 (408 aa).

A signal peptide spans 1-21 (MKSVEWFTWGVFLLLSGFGEA). 6 residues coordinate Mn(2+): histidine 198, aspartate 222, histidine 224, aspartate 226, aspartate 319, and aspartate 321.

Belongs to the arginase family. Mn(2+) serves as cofactor.

It carries out the reaction agmatine + H2O = urea + putrescine. This chain is Putative agmatinase 3, found in Schizosaccharomyces pombe (strain 972 / ATCC 24843) (Fission yeast).